Here is a 711-residue protein sequence, read N- to C-terminus: Denticleless protein homolog B (711 aa).

WD repeat units lie at residues 47-89, 96-135, and 138-178; these read GRAV…MQRL, AHTN…LIGE, and GHQC…KDGF. The DDB1-binding motif motif lies at 168-171; sequence WDTR. A Nuclear localization signal motif is present at residues 197–204; the sequence is PSKVKKRK. WD repeat units follow at residues 215–254, 270–309, 314–355, and 359–398; these read DSQQ…STYR, TRKL…TDPV, GHQN…AAPI, and GHCQ…SEDS. Positions 244 to 247 match the DDB1-binding motif motif; it reads WDLR. 2 disordered regions span residues 473 to 524 and 601 to 698; these read QTPK…AFTP and EFDQ…TPGS. 2 stretches are compositionally biased toward polar residues: residues 504 to 516 and 606 to 627; these read TPKS…SKTP and LSPS…TLSP. The segment covering 631 to 642 has biased composition (basic and acidic residues); sequence MKSDFVDKENSS. Residues 658 to 675 are compositionally biased toward low complexity; the sequence is DNSSPQFKSSSSPSSRNS. A compositionally biased stretch (polar residues) spans 684 to 697; the sequence is NAPNSPVSVPTTPG.

This sequence belongs to the WD repeat cdt2 family. As to quaternary structure, component of the DCX(DTL) E3 ubiquitin ligase complex, at least composed of cul4 (cul4a or cul4b), ddb1, dtl/cdt2 and rbx1.

The protein localises to the nucleus. The protein resides in the cytoplasm. It localises to the cytoskeleton. It is found in the microtubule organizing center. Its subcellular location is the centrosome. The protein localises to the chromosome. Its pathway is protein modification; protein ubiquitination. Functionally, substrate-specific adapter of a DCX (DDB1-CUL4-X-box) E3 ubiquitin-protein ligase complex required for cell cycle control, DNA damage response and translesion DNA synthesis. The DCX(DTL) complex, also named CRL4(CDT2) complex, mediates the polyubiquitination and subsequent degradation of CDT1, CDKN1A/p21(CIP1), KMT5A and SDE2. CDT1 degradation in response to DNA damage is necessary to ensure proper cell cycle regulation of DNA replication. CDKN1A/p21(CIP1) degradation during S phase or following UV irradiation is essential to control replication licensing. KMT5A degradation is also important for a proper regulation of mechanisms such as TGF-beta signaling, cell cycle progression, DNA repair and cell migration. Most substrates require their interaction with PCNA for their polyubiquitination: substrates interact with PCNA via their PIP-box, and those containing the 'K+4' motif in the PIP box, recruit the DCX(DTL) complex, leading to their degradation. In undamaged proliferating cells, the DCX(DTL) complex also promotes the 'Lys-164' monoubiquitination of PCNA, thereby being involved in PCNA-dependent translesion DNA synthesis. May play a role in the regulation of the circadian clock. In Xenopus laevis (African clawed frog), this protein is Denticleless protein homolog B (dtl-b).